The primary structure comprises 470 residues: MSKIQGTLAQWRDRLRRKELSPAELVNLTADAIEADRTTNAYISFDREAALHAAAGADISSPLAGIPIAVKDNINVLGQPTRCASRLLSPYVAPYDATSIRLLKEAGGIPLGRTNMDEFAMGASGENSAYGITRNPEAPDRIPGGSSSGSAAAVASATAIAALGSDTGGSIRQPAGHCGIVGLKPTYGRVSRYGLVAFASSLDQIGPMTRTVEDAAILLQAISGHDRKDSTSANCPVPDFEAALGRDVKGLKVGIPSEYFTSGNHPGISEAVQNTVKQLESLGAELVEVNLPHADAVVAAYYIIACAEASSNLSRFDGVRYGKRAEDAAGLVELFSRTREEGFGPEVKRRIILGTYVLSSGYYDAYYSRAQKVRSLVARDFAEAFSRVDIIVGPTSPAPAPKIGDSALDHLQTYLADIYTIPANLAGLPAMSIPCGTVRESGMELPVGFQMMAPHFREDLLLKTGFALGK.

Active-site charge relay system residues include lysine 71 and serine 146. The Acyl-ester intermediate role is filled by serine 170.

It belongs to the amidase family. GatA subfamily. Heterotrimer of A, B and C subunits.

The catalysed reaction is L-glutamyl-tRNA(Gln) + L-glutamine + ATP + H2O = L-glutaminyl-tRNA(Gln) + L-glutamate + ADP + phosphate + H(+). In terms of biological role, allows the formation of correctly charged Gln-tRNA(Gln) through the transamidation of misacylated Glu-tRNA(Gln) in organisms which lack glutaminyl-tRNA synthetase. The reaction takes place in the presence of glutamine and ATP through an activated gamma-phospho-Glu-tRNA(Gln). This is Glutamyl-tRNA(Gln) amidotransferase subunit A from Akkermansia muciniphila (strain ATCC BAA-835 / DSM 22959 / JCM 33894 / BCRC 81048 / CCUG 64013 / CIP 107961 / Muc).